The following is a 305-amino-acid chain: Putative lipid kinase SaurJH9_0749 (305 aa).

A DAGKc domain is found at 3 to 139 (NKYTHGVLFY…YDVIKINNQY (137 aa)). ATP contacts are provided by residues S44, 74–80 (GDGTVNE), and T101. Positions 220, 223, and 225 each coordinate Mg(2+). E281 (proton acceptor) is an active-site residue.

The protein belongs to the diacylglycerol/lipid kinase family. Requires Mg(2+) as cofactor.

In terms of biological role, may catalyze the ATP-dependent phosphorylation of lipids other than diacylglycerol (DAG). The polypeptide is Putative lipid kinase SaurJH9_0749 (Staphylococcus aureus (strain JH9)).